Reading from the N-terminus, the 119-residue chain is Beta-2-microglobulin (119 aa).

Positions 1-20 are cleaved as a signal peptide; it reads MFRSVALAVLALLFLSGLEA. The Ig-like C1-type domain maps to 25–114; it reads PKIQVYSRHP…VTLSGPRTVK (90 aa). A disulfide bridge connects residues cysteine 45 and cysteine 100.

The protein belongs to the beta-2-microglobulin family. In terms of assembly, heterodimer of an alpha chain and a beta chain. Beta-2-microglobulin is the beta-chain of major histocompatibility complex class I molecules.

It localises to the secreted. In terms of biological role, component of the class I major histocompatibility complex (MHC). Involved in the presentation of peptide antigens to the immune system. The protein is Beta-2-microglobulin (B2M) of Chlorocebus aethiops (Green monkey).